Here is a 120-residue protein sequence, read N- to C-terminus: Transcription elongation factor SPT4 (120 aa).

An interaction with spt-5 region spans residues 1–39; that stretch reads MSASVPADLRNLRACLLCSLVKSVESFQKEGCENCEDVL. The C4-type zinc-finger motif lies at 15-35; that stretch reads CLLCSLVKSVESFQKEGCENC.

It belongs to the SPT4 family. In terms of assembly, interacts with spt-5 to form DSIF. DSIF interacts with RNA polymerase II and with the positive transcription elongation factor b complex (P-TEFb complex), which is composed of cdk-9 and cyclin-T (cit-1.1 or cit-1.2).

Its subcellular location is the nucleus. May function as a component of the DRB sensitivity-inducing factor complex (DSIF complex), which regulates transcription elongation by RNA polymerase II. DSIF may enhance transcriptional pausing at sites proximal to the promoter, which may in turn facilitate the assembly of an elongation competent RNA polymerase II complex. The sequence is that of Transcription elongation factor SPT4 (spt-4) from Caenorhabditis elegans.